The primary structure comprises 598 residues: Auxin response factor 22 (598 aa).

The segment at residues 124 to 226 (NSFTKVLTAS…ELRVGIRRAG (103 aa)) is a DNA-binding region (TF-B3). The region spanning 509–590 (RTCTKVQMQG…MVKKILIFKR (82 aa)) is the PB1 domain.

Belongs to the ARF family. In terms of assembly, homodimers and heterodimers.

The protein localises to the nucleus. In terms of biological role, auxin response factors (ARFs) are transcriptional factors that bind specifically to the DNA sequence 5'-TGTCTC-3' found in the auxin-responsive promoter elements (AuxREs). Could act as transcriptional activator or repressor. Formation of heterodimers with Aux/IAA proteins may alter their ability to modulate early auxin response genes expression. The polypeptide is Auxin response factor 22 (ARF22) (Arabidopsis thaliana (Mouse-ear cress)).